We begin with the raw amino-acid sequence, 88 residues long: UPF0250 protein Shewmr4_0986 (88 aa).

The protein belongs to the UPF0250 family.

This is UPF0250 protein Shewmr4_0986 from Shewanella sp. (strain MR-4).